Reading from the N-terminus, the 78-residue chain is Acyl carrier protein (78 aa).

The 77-residue stretch at 1–77 folds into the Carrier domain; the sequence is MSEVEKKVID…DAIDYIEKNL (77 aa). S37 carries the O-(pantetheine 4'-phosphoryl)serine modification.

The protein belongs to the acyl carrier protein (ACP) family. Post-translationally, 4'-phosphopantetheine is transferred from CoA to a specific serine of apo-ACP by AcpS. This modification is essential for activity because fatty acids are bound in thioester linkage to the sulfhydryl of the prosthetic group.

The protein localises to the cytoplasm. It functions in the pathway lipid metabolism; fatty acid biosynthesis. Carrier of the growing fatty acid chain in fatty acid biosynthesis. This chain is Acyl carrier protein, found in Porphyromonas gingivalis (strain ATCC 33277 / DSM 20709 / CIP 103683 / JCM 12257 / NCTC 11834 / 2561).